Reading from the N-terminus, the 302-residue chain is D-alanine--D-alanine ligase (302 aa).

The region spanning 104-296 (KLVFERFAIP…FPDLVTWLVE (193 aa)) is the ATP-grasp domain. Residue 130-183 (AMARPYVVKPLDQGSSVGVTIVTSETNDLPFSRDDWPYGRQVMVERFIPGRELT) coordinates ATP. Residues Asp251, Glu263, and Asn265 each coordinate Mg(2+).

This sequence belongs to the D-alanine--D-alanine ligase family. It depends on Mg(2+) as a cofactor. The cofactor is Mn(2+).

Its subcellular location is the cytoplasm. The catalysed reaction is 2 D-alanine + ATP = D-alanyl-D-alanine + ADP + phosphate + H(+). It participates in cell wall biogenesis; peptidoglycan biosynthesis. Functionally, cell wall formation. The chain is D-alanine--D-alanine ligase from Rhodospirillum rubrum (strain ATCC 11170 / ATH 1.1.1 / DSM 467 / LMG 4362 / NCIMB 8255 / S1).